The sequence spans 338 residues: Glycerol-3-phosphate dehydrogenase [NAD(P)+] (338 aa).

Residues Ser-12, Trp-13, Arg-33, and Lys-110 each coordinate NADPH. The sn-glycerol 3-phosphate site is built by Lys-110, Gly-141, and Ser-143. Ala-145 contributes to the NADPH binding site. Sn-glycerol 3-phosphate is bound by residues Lys-196, Asp-249, Ser-259, Arg-260, and Asn-261. The active-site Proton acceptor is the Lys-196. NADPH is bound at residue Arg-260. Residues Val-284 and Glu-286 each contribute to the NADPH site.

Belongs to the NAD-dependent glycerol-3-phosphate dehydrogenase family.

It is found in the cytoplasm. It catalyses the reaction sn-glycerol 3-phosphate + NAD(+) = dihydroxyacetone phosphate + NADH + H(+). The enzyme catalyses sn-glycerol 3-phosphate + NADP(+) = dihydroxyacetone phosphate + NADPH + H(+). The protein operates within membrane lipid metabolism; glycerophospholipid metabolism. Its function is as follows. Catalyzes the reduction of the glycolytic intermediate dihydroxyacetone phosphate (DHAP) to sn-glycerol 3-phosphate (G3P), the key precursor for phospholipid synthesis. The protein is Glycerol-3-phosphate dehydrogenase [NAD(P)+] of Limosilactobacillus reuteri (strain DSM 20016) (Lactobacillus reuteri).